We begin with the raw amino-acid sequence, 179 residues long: Putative ankyrin repeat protein RF_0922 (179 aa).

ANK repeat units lie at residues Lys5–Ile34, Asn40–Val72, Asn75–Ile104, Asn110–Ile139, and Asn145–Ile174.

In Rickettsia felis (strain ATCC VR-1525 / URRWXCal2) (Rickettsia azadi), this protein is Putative ankyrin repeat protein RF_0922.